We begin with the raw amino-acid sequence, 185 residues long: Ribosome-recycling factor (185 aa).

Belongs to the RRF family.

It localises to the cytoplasm. Functionally, responsible for the release of ribosomes from messenger RNA at the termination of protein biosynthesis. May increase the efficiency of translation by recycling ribosomes from one round of translation to another. The polypeptide is Ribosome-recycling factor (Shewanella oneidensis (strain ATCC 700550 / JCM 31522 / CIP 106686 / LMG 19005 / NCIMB 14063 / MR-1)).